Here is a 161-residue protein sequence, read N- to C-terminus: Phosphopantetheine adenylyltransferase (161 aa).

S11 is a substrate binding site. ATP-binding positions include 11-12 (SF) and H19. K43, L75, and R89 together coordinate substrate. ATP contacts are provided by residues 90–92 (GLR), E100, and 125–131 (YSYLSSS).

This sequence belongs to the bacterial CoaD family. In terms of assembly, homohexamer. Mg(2+) serves as cofactor.

The protein localises to the cytoplasm. It carries out the reaction (R)-4'-phosphopantetheine + ATP + H(+) = 3'-dephospho-CoA + diphosphate. It functions in the pathway cofactor biosynthesis; coenzyme A biosynthesis; CoA from (R)-pantothenate: step 4/5. Reversibly transfers an adenylyl group from ATP to 4'-phosphopantetheine, yielding dephospho-CoA (dPCoA) and pyrophosphate. This Geotalea daltonii (strain DSM 22248 / JCM 15807 / FRC-32) (Geobacter daltonii) protein is Phosphopantetheine adenylyltransferase.